The following is a 178-amino-acid chain: Transcription factor E (178 aa).

The region spanning 3 to 86 (AHEALAEIAG…YWRITDEPIQ (84 aa)) is the HTH TFE/IIEalpha-type domain.

Belongs to the TFE family. As to quaternary structure, monomer. Interaction with RNA polymerase subunits RpoF and RpoE is necessary for Tfe stimulatory transcription activity. Able to interact with Tbp and RNA polymerase in the absence of DNA promoter. Interacts both with the preinitiation and elongation complexes.

Its function is as follows. Transcription factor that plays a role in the activation of archaeal genes transcribed by RNA polymerase. Facilitates transcription initiation by enhancing TATA-box recognition by TATA-box-binding protein (Tbp), and transcription factor B (Tfb) and RNA polymerase recruitment. Not absolutely required for transcription in vitro, but particularly important in cases where Tbp or Tfb function is not optimal. It dynamically alters the nucleic acid-binding properties of RNA polymerases by stabilizing the initiation complex and destabilizing elongation complexes. Seems to translocate with the RNA polymerase following initiation and acts by binding to the non template strand of the transcription bubble in elongation complexes. The protein is Transcription factor E of Thermofilum pendens (strain DSM 2475 / Hrk 5).